A 349-amino-acid chain; its full sequence is S-adenosylmethionine:tRNA ribosyltransferase-isomerase (349 aa).

The protein belongs to the QueA family. In terms of assembly, monomer.

It is found in the cytoplasm. The catalysed reaction is 7-aminomethyl-7-carbaguanosine(34) in tRNA + S-adenosyl-L-methionine = epoxyqueuosine(34) in tRNA + adenine + L-methionine + 2 H(+). It functions in the pathway tRNA modification; tRNA-queuosine biosynthesis. Its function is as follows. Transfers and isomerizes the ribose moiety from AdoMet to the 7-aminomethyl group of 7-deazaguanine (preQ1-tRNA) to give epoxyqueuosine (oQ-tRNA). The polypeptide is S-adenosylmethionine:tRNA ribosyltransferase-isomerase (Azotobacter vinelandii (strain DJ / ATCC BAA-1303)).